A 1060-amino-acid chain; its full sequence is Beta-galactosidase (1060 aa).

Asn-110 and Asp-209 together coordinate substrate. Asp-209 lines the Na(+) pocket. Mg(2+) is bound by residues Glu-432, His-434, and Glu-477. Residues Glu-477 and 553 to 556 (EYAH) contribute to the substrate site. Catalysis depends on Glu-477, which acts as the Proton donor. Residue Glu-553 is the Nucleophile of the active site. Residue Asn-613 coordinates Mg(2+). Na(+)-binding residues include Phe-617 and Asn-620. Positions 620 and 1035 each coordinate substrate.

It belongs to the glycosyl hydrolase 2 family. Homotetramer. Mg(2+) serves as cofactor. Requires Na(+) as cofactor.

The catalysed reaction is Hydrolysis of terminal non-reducing beta-D-galactose residues in beta-D-galactosides.. This Yersinia pestis bv. Antiqua (strain Antiqua) protein is Beta-galactosidase.